Consider the following 236-residue polypeptide: Virion protein US10 homolog (236 aa).

The interval 1 to 32 (MDGAYGHVHNGSPMAVDGEESGAGTGTGAGAD) is disordered. Residues 21–31 (SGAGTGTGAGA) show a composition bias toward gly residues. A zinc finger spans residues 138-150 (CAYWCCLGHAFAC).

Belongs to the herpesviridae US10 family. Phosphorylated.

The protein resides in the virion tegument. It is found in the host nucleus matrix. This Equine herpesvirus 1 (strain Ab4p) (EHV-1) protein is Virion protein US10 homolog.